A 438-amino-acid polypeptide reads, in one-letter code: Putative phospholipase A2 (438 aa).

Serine 257 functions as the Nucleophile in the catalytic mechanism. Active-site charge relay system residues include aspartate 291 and histidine 368.

This sequence belongs to the serine esterase family.

It localises to the cytoplasm. It is found in the nucleus. The catalysed reaction is a 1-O-alkyl-2-acetyl-sn-glycero-3-phosphocholine + H2O = a 1-O-alkyl-sn-glycero-3-phosphocholine + acetate + H(+). This Schizosaccharomyces pombe (strain 972 / ATCC 24843) (Fission yeast) protein is Putative phospholipase A2.